We begin with the raw amino-acid sequence, 1040 residues long: Multidrug resistance protein MdtB (1040 aa).

Helical transmembrane passes span 16–36 (FIMR…AGII), 347–367 (LMMA…NIPA), 369–389 (IIPG…MVFL), 396–416 (LTLM…IVVI), 440–460 (IGFT…PLLF), 472–492 (FAIT…TLTP), 537–557 (WLTL…WVFI), 863–883 (LGST…VLGI), 888–908 (FIHP…ALLA), 911–931 (IAGS…IGIV), 968–988 (ILMT…STGV), and 998–1018 (IGMV…TPVI).

Belongs to the resistance-nodulation-cell division (RND) (TC 2.A.6) family. MdtB subfamily. Part of a tripartite efflux system composed of MdtA, MdtB and MdtC. MdtB forms a heteromultimer with MdtC.

Its subcellular location is the cell inner membrane. The MdtABC tripartite complex confers resistance against novobiocin and deoxycholate. The chain is Multidrug resistance protein MdtB from Escherichia coli (strain 55989 / EAEC).